The following is a 673-amino-acid chain: DNA topoisomerase 1 (673 aa).

The 134-residue stretch at 1 to 134 folds into the Toprim domain; sequence MVAEKPKAAA…ARRMKFSTLA (134 aa). Mg(2+) is bound by residues glutamate 4 and aspartate 103. The Topo IA-type catalytic domain occupies 149–568; it reads DVEMIEAGMA…MSKKTISKLL (420 aa). The segment at 189–194 is interaction with DNA; that stretch reads SAGRVQ. Tyrosine 311 (O-(5'-phospho-DNA)-tyrosine intermediate) is an active-site residue. The tract at residues 352–374 is disordered; the sequence is LRPVQGSKDDPAHPAIHPTGEKP. A C4-type zinc finger spans residues 595-615; that stretch reads CHLCGRKAVSAVSGYRLCSHH.

This sequence belongs to the type IA topoisomerase family. In terms of assembly, monomer. Requires Mg(2+) as cofactor.

The enzyme catalyses ATP-independent breakage of single-stranded DNA, followed by passage and rejoining.. Releases the supercoiling and torsional tension of DNA, which is introduced during the DNA replication and transcription, by transiently cleaving and rejoining one strand of the DNA duplex. Introduces a single-strand break via transesterification at a target site in duplex DNA. The scissile phosphodiester is attacked by the catalytic tyrosine of the enzyme, resulting in the formation of a DNA-(5'-phosphotyrosyl)-enzyme intermediate and the expulsion of a 3'-OH DNA strand. The free DNA strand then undergoes passage around the unbroken strand, thus removing DNA supercoils. Finally, in the religation step, the DNA 3'-OH attacks the covalent intermediate to expel the active-site tyrosine and restore the DNA phosphodiester backbone. This chain is DNA topoisomerase 1, found in Aeropyrum pernix (strain ATCC 700893 / DSM 11879 / JCM 9820 / NBRC 100138 / K1).